A 356-amino-acid chain; its full sequence is Replication factor C subunit 3 (356 aa).

Lys-20 is subject to N6-acetyllysine. Ser-125 bears the Phosphoserine mark.

Belongs to the activator 1 small subunits family. In terms of assembly, subunit of the RFC complex, an heteropentameric complex consisting of a large subunit RFC1 and four small subunits RFC2, RFC3, RFC4 and RFC5; the RFC complex interacts with PCNA. Forms an heterotetrameric complex with RFC2, RFC4 and RFC5; this complex has ATPase activity but is not stimulated by PCNA. The heterotetramer of subunits RFC2, RFC3, RFC4 and RFC5 interacts with RAD17. Interacts with CNTD1; this interaction facilitates crossover formation.

The protein localises to the nucleus. Its function is as follows. Subunit of the replication factor C (RFC) complex which acts during elongation of primed DNA templates by DNA polymerases delta and epsilon, and is necessary for ATP-dependent loading of proliferating cell nuclear antigen (PCNA) onto primed DNA. This chain is Replication factor C subunit 3 (RFC3), found in Homo sapiens (Human).